Reading from the N-terminus, the 317-residue chain is Melanocyte-stimulating hormone receptor (317 aa).

Over Met-1–Glu-37 the chain is Extracellular. A glycan (N-linked (GlcNAc...) asparagine) is linked at Asn-29. The chain crosses the membrane as a helical span at residues Val-38–Ile-63. Topologically, residues Ala-64–Pro-72 are cytoplasmic. A helical membrane pass occupies residues Met-73 to Leu-93. The Extracellular portion of the chain corresponds to Glu-94–Asn-118. The helical transmembrane segment at Thr-119–Val-140 threads the bilayer. The Cytoplasmic portion of the chain corresponds to Asp-141–Arg-163. Residues Ala-164–Cys-183 form a helical membrane-spanning segment. The Extracellular portion of the chain corresponds to Asp-184–Cys-191. A helical transmembrane segment spans residues Leu-192 to Leu-211. Residues Ala-212–Ala-240 are Cytoplasmic-facing. Residues Ala-241 to Leu-266 traverse the membrane as a helical segment. The Extracellular segment spans residues Cys-267 to Asn-279. Residues Phe-280–Phe-300 traverse the membrane as a helical segment. At Arg-301 to Trp-317 the chain is on the cytoplasmic side. A lipid anchor (S-palmitoyl cysteine) is attached at Cys-315.

It belongs to the G-protein coupled receptor 1 family. As to quaternary structure, interacts with MGRN1, but does not undergo MGRN1-mediated ubiquitination; this interaction competes with GNAS-binding and thus inhibits agonist-induced cAMP production. Interacts with OPN3; the interaction results in a decrease in MC1R-mediated cAMP signaling and ultimately a decrease in melanin production in melanocytes.

The protein resides in the cell membrane. Receptor for MSH (alpha, beta and gamma) and ACTH. The activity of this receptor is mediated by G proteins which activate adenylate cyclase. Mediates melanogenesis, the production of eumelanin (black/brown) and phaeomelanin (red/yellow), via regulation of cAMP signaling in melanocytes. This Alouatta palliata (Mantled howler monkey) protein is Melanocyte-stimulating hormone receptor (MC1R).